A 406-amino-acid polypeptide reads, in one-letter code: Tryptophan synthase beta chain (406 aa).

An N6-(pyridoxal phosphate)lysine modification is found at Lys95.

The protein belongs to the TrpB family. In terms of assembly, tetramer of two alpha and two beta chains. The cofactor is pyridoxal 5'-phosphate.

It carries out the reaction (1S,2R)-1-C-(indol-3-yl)glycerol 3-phosphate + L-serine = D-glyceraldehyde 3-phosphate + L-tryptophan + H2O. It participates in amino-acid biosynthesis; L-tryptophan biosynthesis; L-tryptophan from chorismate: step 5/5. The beta subunit is responsible for the synthesis of L-tryptophan from indole and L-serine. The polypeptide is Tryptophan synthase beta chain (Pseudomonas fluorescens (strain ATCC BAA-477 / NRRL B-23932 / Pf-5)).